Reading from the N-terminus, the 378-residue chain is Dihydroorotate dehydrogenase (quinone) (378 aa).

Residues Ala-77 to Lys-81 and Thr-101 each bind FMN. A substrate-binding site is contributed by Lys-81. Asn-126–Phe-130 serves as a coordination point for substrate. FMN is bound by residues Asn-158 and Asn-191. Asn-191 serves as a coordination point for substrate. Ser-194 serves as the catalytic Nucleophile. A substrate-binding site is contributed by Asn-196. Positions 229 and 257 each coordinate FMN. Asn-258–Thr-259 serves as a coordination point for substrate. FMN-binding positions include Gly-287, Gly-316, and Tyr-337–Thr-338.

It belongs to the dihydroorotate dehydrogenase family. Type 2 subfamily. In terms of assembly, monomer. Requires FMN as cofactor.

Its subcellular location is the cell membrane. The catalysed reaction is (S)-dihydroorotate + a quinone = orotate + a quinol. The protein operates within pyrimidine metabolism; UMP biosynthesis via de novo pathway; orotate from (S)-dihydroorotate (quinone route): step 1/1. In terms of biological role, catalyzes the conversion of dihydroorotate to orotate with quinone as electron acceptor. The chain is Dihydroorotate dehydrogenase (quinone) from Synechococcus elongatus (strain ATCC 33912 / PCC 7942 / FACHB-805) (Anacystis nidulans R2).